The sequence spans 753 residues: LIM domain and actin-binding protein 1 (753 aa).

At Met-1 the chain carries N-acetylmethionine. Ser-15 is subject to Phosphoserine. Residues 46–56 (EEANMERKKNN) are compositionally biased toward basic and acidic residues. Disordered stretches follow at residues 46 to 66 (EEAN…HFRR) and 82 to 186 (GAEF…TSGK). The residue at position 132 (Ser-132) is a Phosphoserine. The span at 143–152 (PRSENSHDFK) shows a compositional bias: basic and acidic residues. Residues 164 to 166 (CLG) carry the Required for interaction with NPC1L1 motif. The span at 167–177 (DSRHEAEKPET) shows a compositional bias: basic and acidic residues. Phosphoserine is present on residues Ser-225, Ser-230, Ser-242, and Ser-263. 2 disordered regions span residues 276–326 (AAVS…VSTT) and 341–379 (TCNS…TAKK). A compositionally biased stretch (polar residues) spans 278 to 291 (VSKQSSPASYTNEL). Residues 292-305 (KTSESKTHKWEQKE) are compositionally biased toward basic and acidic residues. A compositionally biased stretch (polar residues) spans 342 to 351 (CNSQVKSEAQ). A phosphoserine mark is found at Ser-348, Ser-360, Ser-367, and Ser-372. Over residues 363–375 (ARTSSLPESSPSK) the composition is skewed to polar residues. The region spanning 386–446 (ESCVECQKTV…KPHFNQLFKS (61 aa)) is the LIM zinc-binding domain. Position 437 is an N6-succinyllysine (Lys-437). 3 positions are modified to phosphoserine: Ser-467, Ser-485, and Ser-488. Disordered stretches follow at residues 467 to 493 (SDNE…GVED), 505 to 669 (SMEA…FELE), and 682 to 703 (EDDN…GWSG). Residues 491 to 511 (VEDAPIAKVGVLAASMEAKAS) form a required for interaction with MYO5B region. Composition is skewed to basic and acidic residues over residues 512 to 525 (SQRE…ETKK) and 554 to 565 (WPPEDDVCKTEA). Residues 598–609 (SSIKSPKASSPS) are compositionally biased toward low complexity. 4 positions are modified to phosphoserine: Ser-599, Ser-602, Ser-607, and Ser-615. Residues 630–666 (MERKQTENARPSGEKENVGKSRWQGEEVPRSKDRSSF) show a composition bias toward basic and acidic residues. Phosphoserine is present on residues Ser-692, Ser-720, and Ser-735.

As to quaternary structure, interacts with NPC1L1; bridges NPC1L1 with MYO5B. Interacts with MYO5B; bridges MYO5B with NPC1L1. Interacts with PXN; this complex stabilizes actin dynamics. Binds to G-actin and F-actin. Interacts with LUZP1 (via C-terminus); both proteins restrict ciliation and may work together to regulate this process. Binds RAB40B (GTP-bound); interaction influences LIMA1 subcellular localization in lamellipodia during cell migration. Phosphorylation of the C-terminal region by MAPK1/MAPK3 reduces its association with F-actin and contributes to actin filament reorganization and enhances cell motility. In terms of processing, ubiquitinated by the ECS(RAB40B) complex leading to its degradation. As to expression, highly expressed in the small intestine, including the duodenum, jejunum, and ileum. Low expression in the liver and very low expressed in the heart, spleen, lung, brain, and pancreas. Isoform Alpha is highly expressed in embryos from day 7-11 and in adult spleen and lung. Isoform Beta expression is highest in adult kidney, testis, lung and liver, intermediate in heart, brain, spleen, skeletal muscle and low in embryos.

It is found in the cytoplasm. It localises to the cell junction. Its subcellular location is the focal adhesion. The protein resides in the cytoskeleton. The protein localises to the stress fiber. It is found in the cell membrane. It localises to the cell projection. Its subcellular location is the ruffle. The protein resides in the lamellipodium. In terms of biological role, actin-binding protein involved in actin cytoskeleton regulation and dynamics. Increases the number and size of actin stress fibers and inhibits membrane ruffling. Inhibits actin filament depolymerization. Bundles actin filaments, delays filament nucleation and reduces formation of branched filaments. Acts as a negative regulator of primary cilium formation. Plays a role in cholesterol homeostasis. Influences plasma cholesterol levels through regulation of intestinal cholesterol absorption. May act as a scaffold protein by regulating NPC1L1 transportation, an essential protein for cholesterol absorption, to the plasma membrane by recruiting MYO5B to NPC1L1, and thus facilitates cholesterol uptake. The sequence is that of LIM domain and actin-binding protein 1 (Lima1) from Mus musculus (Mouse).